Reading from the N-terminus, the 439-residue chain is Exodeoxyribonuclease 7 large subunit (439 aa).

It belongs to the XseA family. Heterooligomer composed of large and small subunits.

The protein localises to the cytoplasm. It carries out the reaction Exonucleolytic cleavage in either 5'- to 3'- or 3'- to 5'-direction to yield nucleoside 5'-phosphates.. In terms of biological role, bidirectionally degrades single-stranded DNA into large acid-insoluble oligonucleotides, which are then degraded further into small acid-soluble oligonucleotides. The protein is Exodeoxyribonuclease 7 large subunit of Haemophilus influenzae (strain 86-028NP).